The primary structure comprises 363 residues: Dihydroorotate dehydrogenase (quinone) (363 aa).

Residues Ala70–Lys74 and Thr94 contribute to the FMN site. Lys74 is a binding site for substrate. A substrate-binding site is contributed by Asn119–Phe123. Asn147 and Asn180 together coordinate FMN. Asn180 serves as a coordination point for substrate. The Nucleophile role is filled by Ser183. Asn185 is a substrate binding site. Positions 216 and 244 each coordinate FMN. Asn245–Thr246 lines the substrate pocket. FMN contacts are provided by residues Gly270, Gly299, and Tyr320–Thr321.

The protein belongs to the dihydroorotate dehydrogenase family. Type 2 subfamily. Monomer. FMN serves as cofactor.

The protein localises to the cell membrane. The catalysed reaction is (S)-dihydroorotate + a quinone = orotate + a quinol. The protein operates within pyrimidine metabolism; UMP biosynthesis via de novo pathway; orotate from (S)-dihydroorotate (quinone route): step 1/1. Its function is as follows. Catalyzes the conversion of dihydroorotate to orotate with quinone as electron acceptor. This is Dihydroorotate dehydrogenase (quinone) from Corynebacterium diphtheriae (strain ATCC 700971 / NCTC 13129 / Biotype gravis).